The sequence spans 633 residues: Polypeptide N-acetylgalactosaminyltransferase 3 (633 aa).

Residues 1–19 lie on the Cytoplasmic side of the membrane; the sequence is MAHLKRLVKLHIKRHYHRK. Residues 20–37 form a helical; Signal-anchor for type II membrane protein membrane-spanning segment; that stretch reads FWKLGAVIFFFLVVLILM. At 38–633 the chain is on the lumenal side; the sequence is QREVSVQYSK…LQKWIFSQND (596 aa). The segment at 112-145 is disordered; that stretch reads DRPPQDSNAPGASGKPFKITHLSPEEQKEKERGE. Residues 134–145 show a composition bias toward basic and acidic residues; sequence SPEEQKEKERGE. A catalytic subdomain A region spans residues 184–293; sequence LPTTSVIIVF…YGWLEPLLAR (110 aa). Mn(2+) contacts are provided by Asp277 and His279. An N-linked (GlcNAc...) asparagine glycan is attached at Asn297. A catalytic subdomain B region spans residues 356–418; sequence PIKTPTFAGG…PCSVVGHVFR (63 aa). His415 is a binding site for Mn(2+). Asn484 carries N-linked (GlcNAc...) asparagine glycosylation. The region spanning 504–630 is the Ricin B-type lectin domain; it reads VISGYIKSVG…TDLLQKWIFS (127 aa). Cysteines 517 and 535 form a disulfide. UDP-N-acetyl-alpha-D-galactosamine-binding residues include Asp519, Glu522, His536, and Asn541. Cystine bridges form between Cys561–Cys574 and Cys605–Cys618.

The protein belongs to the glycosyltransferase 2 family. GalNAc-T subfamily. Requires Mn(2+) as cofactor. Highly expressed in the reproductive tract, principally in the testis and uterus, and to a lesser degree in the cervix with only trace levels in the ovary. Also expressed at high level in sublingual gland, stomach and colon, with more moderate amounts present in the submandibular and parotid gland as well as the kidney.

It is found in the golgi apparatus. It localises to the golgi stack membrane. The catalysed reaction is L-seryl-[protein] + UDP-N-acetyl-alpha-D-galactosamine = a 3-O-[N-acetyl-alpha-D-galactosaminyl]-L-seryl-[protein] + UDP + H(+). It catalyses the reaction L-threonyl-[protein] + UDP-N-acetyl-alpha-D-galactosamine = a 3-O-[N-acetyl-alpha-D-galactosaminyl]-L-threonyl-[protein] + UDP + H(+). It participates in protein modification; protein glycosylation. Its function is as follows. Catalyzes the initial reaction in O-linked oligosaccharide biosynthesis, the transfer of an N-acetyl-D-galactosamine residue to a serine or threonine residue on the protein receptor. Has activity toward HIV envelope glycoprotein gp120. Has activity towards EA2, MUC2 and MUC5. Probably glycosylates fibronectin in vivo. Glycosylates FGF23. The protein is Polypeptide N-acetylgalactosaminyltransferase 3 (Galnt3) of Mus musculus (Mouse).